Here is a 298-residue protein sequence, read N- to C-terminus: MTTHRPLFYGSITALITPMNNHGEVDFNALKKLVEYHIVSGTHAIVSVGTTGESATLSIAENVKTILKTLEFADGRIPIIAGTGANATSEAITMTKLLNDSGVAGCLSVVPYYNKPTQEGMYQHFKAIAECTDIPQILYNVPSRTGSDLLPETVGRLSQIANIVGIKEATGDVSRVAKIKQMAGEDFIFLSGDDATGLESMKLGGQGVISVTNNIAAADMAKMCELALAGKFDEAEIINDKLRALHKDLFIESNPIPVKWAAYKLGLVPDPILRLPLTTLSEQAQPKIINALKNAGLL.

Residue Thr-51 coordinates pyruvate. Tyr-139 serves as the catalytic Proton donor/acceptor. Lys-167 serves as the catalytic Schiff-base intermediate with substrate. Pyruvate is bound at residue Ile-209.

Belongs to the DapA family. In terms of assembly, homotetramer; dimer of dimers.

Its subcellular location is the cytoplasm. The catalysed reaction is L-aspartate 4-semialdehyde + pyruvate = (2S,4S)-4-hydroxy-2,3,4,5-tetrahydrodipicolinate + H2O + H(+). The protein operates within amino-acid biosynthesis; L-lysine biosynthesis via DAP pathway; (S)-tetrahydrodipicolinate from L-aspartate: step 3/4. Catalyzes the condensation of (S)-aspartate-beta-semialdehyde [(S)-ASA] and pyruvate to 4-hydroxy-tetrahydrodipicolinate (HTPA). The polypeptide is 4-hydroxy-tetrahydrodipicolinate synthase (Histophilus somni (strain 129Pt) (Haemophilus somnus)).